A 198-amino-acid polypeptide reads, in one-letter code: Probable thymidylate kinase (198 aa).

7-14 (GIDGAGKS) serves as a coordination point for ATP.

This sequence belongs to the thymidylate kinase family.

It carries out the reaction dTMP + ATP = dTDP + ADP. The polypeptide is Probable thymidylate kinase (Methanocorpusculum labreanum (strain ATCC 43576 / DSM 4855 / Z)).